The sequence spans 174 residues: Crossover junction endodeoxyribonuclease RuvC (174 aa).

Catalysis depends on residues Asp-8, Glu-67, and Asp-139. Positions 8, 67, and 139 each coordinate Mg(2+).

It belongs to the RuvC family. As to quaternary structure, homodimer which binds Holliday junction (HJ) DNA. The HJ becomes 2-fold symmetrical on binding to RuvC with unstacked arms; it has a different conformation from HJ DNA in complex with RuvA. In the full resolvosome a probable DNA-RuvA(4)-RuvB(12)-RuvC(2) complex forms which resolves the HJ. It depends on Mg(2+) as a cofactor.

Its subcellular location is the cytoplasm. The catalysed reaction is Endonucleolytic cleavage at a junction such as a reciprocal single-stranded crossover between two homologous DNA duplexes (Holliday junction).. Functionally, the RuvA-RuvB-RuvC complex processes Holliday junction (HJ) DNA during genetic recombination and DNA repair. Endonuclease that resolves HJ intermediates. Cleaves cruciform DNA by making single-stranded nicks across the HJ at symmetrical positions within the homologous arms, yielding a 5'-phosphate and a 3'-hydroxyl group; requires a central core of homology in the junction. The consensus cleavage sequence is 5'-(A/T)TT(C/G)-3'. Cleavage occurs on the 3'-side of the TT dinucleotide at the point of strand exchange. HJ branch migration catalyzed by RuvA-RuvB allows RuvC to scan DNA until it finds its consensus sequence, where it cleaves and resolves the cruciform DNA. This chain is Crossover junction endodeoxyribonuclease RuvC, found in Pseudomonas aeruginosa (strain LESB58).